A 343-amino-acid polypeptide reads, in one-letter code: Phospholipid phosphatase-related protein type 2 (343 aa).

The next 3 membrane-spanning stretches (helical) occupy residues 12–32, 69–89, and 129–149; these read FSII…VILL, VPPA…ILLG, and FLGV…AGQV. Asparagine 165 carries an N-linked (GlcNAc...) asparagine glycan. The next 3 helical transmembrane spans lie at 210–230, 239–259, and 266–286; these read AALC…VFRV, SLCL…VAEY, and VLAG…CVVH. Positions 290–343 are disordered; it reads SRPPSGRRLSPWEDLGQAPTMDSPLEKNPRSAGRIRHRHGSPHPSRRTAPAVAT. A phosphoserine mark is found at serine 299 and serine 312. Positions 322-335 are enriched in basic residues; the sequence is GRIRHRHGSPHPSR.

It belongs to the PA-phosphatase related phosphoesterase family.

Its subcellular location is the membrane. The protein is Phospholipid phosphatase-related protein type 2 of Homo sapiens (Human).